An 82-amino-acid chain; its full sequence is Cyclin-dependent protein kinase inhibitor SMR5 (82 aa).

The segment at 1–26 is disordered; sequence MEEKNYDDGDTVTVDDDYQMGCTTPT. Residues 8-18 are compositionally biased toward acidic residues; the sequence is DGDTVTVDDDY.

As to quaternary structure, interacts with CDKA-1 and D-type cyclins. As to expression, expressed in columella cells in the roots and in root meristems after induction.

Its function is as follows. Probable cyclin-dependent protein kinase (CDK) inhibitor that functions as a repressor of mitosis in the endoreduplication cell cycle. Acts as a potent cell cycle inhibitor, regulating a hydroxyurea-dependent checkpoint in leaves. Essential to activate a high-light-dependent cell cycle checkpoint. This is Cyclin-dependent protein kinase inhibitor SMR5 from Arabidopsis thaliana (Mouse-ear cress).